Consider the following 302-residue polypeptide: Aspartate carbamoyltransferase catalytic subunit (302 aa).

Carbamoyl phosphate-binding residues include Arg49 and Thr50. Lys77 provides a ligand contact to L-aspartate. 3 residues coordinate carbamoyl phosphate: Arg99, His126, and Gln129. 2 residues coordinate L-aspartate: Arg159 and Arg209. Carbamoyl phosphate contacts are provided by Ala250 and Pro251.

It belongs to the aspartate/ornithine carbamoyltransferase superfamily. ATCase family. As to quaternary structure, heterododecamer (2C3:3R2) of six catalytic PyrB chains organized as two trimers (C3), and six regulatory PyrI chains organized as three dimers (R2).

It catalyses the reaction carbamoyl phosphate + L-aspartate = N-carbamoyl-L-aspartate + phosphate + H(+). The protein operates within pyrimidine metabolism; UMP biosynthesis via de novo pathway; (S)-dihydroorotate from bicarbonate: step 2/3. Functionally, catalyzes the condensation of carbamoyl phosphate and aspartate to form carbamoyl aspartate and inorganic phosphate, the committed step in the de novo pyrimidine nucleotide biosynthesis pathway. The sequence is that of Aspartate carbamoyltransferase catalytic subunit from Staphylococcus carnosus (strain TM300).